The primary structure comprises 700 residues: Suprabasin (700 aa).

An N-terminal signal peptide occupies residues Met1–Ala23. Disordered stretches follow at residues Gln133 to Lys158, His183 to Lys258, and His283 to His391. Residues Lys488 to Lys546 adopt a coiled-coil conformation. Residues Gly641–Asn654 are compositionally biased toward polar residues. Positions Gly641–Gly669 are disordered. A compositionally biased stretch (gly residues) spans Gln658 to Gly668.

In terms of tissue distribution, detected in epidermis, in suprabasal keratinocytes. Detected in suprabasal layers of embryonic epidermis and in stratified layers of embryonic tongue and palate. Detected in adult stomach.

The protein localises to the secreted. The chain is Suprabasin (Sbsn) from Mus musculus (Mouse).